Reading from the N-terminus, the 983-residue chain is Nuclear factor NF-kappa-B p105 subunit (983 aa).

Residues 47 to 372 (PYLQIIEQPK…EVQRKRQKLM (326 aa)) form the RHD domain. At Cys-66 the chain carries S-nitrosocysteine. Phosphoserine; by PKA is present on Ser-342. The short motif at 365–370 (QRKRQK) is the Nuclear localization signal element. The segment at 377–397 (DGYGGGSGAGGGGMFGGGGGG) is GRR. The disordered stretch occupies residues 423-454 (KSNAGMKHELSNSTVKKDEESSDKQSDKWDTK). The segment covering 428–454 (MKHELSNSTVKKDEESSDKQSDKWDTK) has biased composition (basic and acidic residues). ANK repeat units follow at residues 540–569 (NGDN…DMNY), 579–608 (LYQT…NVNL), 612–641 (HGNS…ASSM), 648–677 (EGLS…DVNA), 682–712 (SGRT…DVDS), 716–745 (DGTT…DPHV), and 769–799 (PGTT…AVSE). Positions 804 to 891 (QGPLRELNES…EAIEVIQKAL (88 aa)) constitute a Death domain. Ser-938 carries the phosphoserine modification.

In terms of assembly, active NF-kappa-B is a heterodimer of an about 50 kDa DNA-binding subunit and the weak DNA-binding subunit p65. Two heterodimers might form a labile tetramer. Generation of the NF-kappa-B p50 (Nuclear factor NF-kappa-B p50 subunit) transcription factor takes place both cotranslationally and post-translationally via non-mutually exclusive mechanisms. A cotranslational processing allows the production of both p50 and p105 (Nuclear factor NF-kappa-B p105 subunit) from a single NFKB1 mRNA. While translation occurs, the particular unfolded structure after the GRR repeat region acts as a substrate for the proteasome, promoting degradation of the C-terminus. The GRR acts as a proteasomal 'stop signal', protecting the region upstream of the GRR from degradation and promoting generation of p50. It is unclear if limited proteasome degradation during cotranslational processing depends on ubiquitination. NF-kappa-B p50 is also generated post-translationally following ubiquitination by the KPC complex, leading to limited processing by the proteasome downstream of the GRR region, thereby generating p50. Post-translationally, phosphorylation at the C-terminus by IKBKB/IKKB acts as a signal for ubiquitination and promotes either complete degradation or processing to generate the NF-kappa-B p50 (Nuclear factor NF-kappa-B p50 subunit). Phosphorylation at Ser-938 are required for BTRC/BTRCP-mediated ubiquitination and proteolysis. Phosphorylation at Ser-938 is also required for ubiquitination by the KPC complex and limited processing to generate NF-kappa-B p50 (Nuclear factor NF-kappa-B p50 subunit). In terms of processing, polyubiquitinated at multiple Lys residues in the C-terminus. Polyubiquitinated by the SCF(FBXW11) and SCF(BTRC) complexes following phosphorylation at Ser-938, leading to its complete degradation. In contrast, polyubiquitination by the KPC complex following phosphorylation at Ser-938 leads to limited proteosomal processing and generation of the active NF-kappa-B p50 (Nuclear factor NF-kappa-B p50 subunit). S-nitrosylation of Cys-66 affects DNA binding. Post-translationally, the covalent modification of cysteine by 15-deoxy-Delta12,14-prostaglandin-J2 is autocatalytic and reversible. It may occur as an alternative to other cysteine modifications, such as S-nitrosylation and S-palmitoylation.

The protein localises to the cytoplasm. It localises to the nucleus. Its function is as follows. P105 is the precursor of the active p50 subunit (Nuclear factor NF-kappa-B p50 subunit) of the nuclear factor NF-kappa-B. The precursor protein itself does not bind to DNA. Acts as a cytoplasmic retention of attached NF-kappa-B proteins by p105. Constitutes the active form, which associates with RELA/p65 to form the NF-kappa-B p65-p50 complex to form a transcription factor. Together with RELA/p65, binds to the kappa-B consensus sequence 5'-GGRNNYYCC-3', located in the enhancer region of genes involved in immune response and acute phase reactions. The polypeptide is Nuclear factor NF-kappa-B p105 subunit (NFKB1) (Gallus gallus (Chicken)).